Reading from the N-terminus, the 236-residue chain is tRNA1(Val) (adenine(37)-N6)-methyltransferase (236 aa).

It belongs to the methyltransferase superfamily. tRNA (adenine-N(6)-)-methyltransferase family.

The protein localises to the cytoplasm. The catalysed reaction is adenosine(37) in tRNA1(Val) + S-adenosyl-L-methionine = N(6)-methyladenosine(37) in tRNA1(Val) + S-adenosyl-L-homocysteine + H(+). In terms of biological role, specifically methylates the adenine in position 37 of tRNA(1)(Val) (anticodon cmo5UAC). The sequence is that of tRNA1(Val) (adenine(37)-N6)-methyltransferase from Aeromonas hydrophila subsp. hydrophila (strain ATCC 7966 / DSM 30187 / BCRC 13018 / CCUG 14551 / JCM 1027 / KCTC 2358 / NCIMB 9240 / NCTC 8049).